The following is a 278-amino-acid chain: Sulfur carrier protein FdhD (278 aa).

Cys121 functions as the Cysteine persulfide intermediate in the catalytic mechanism. 260 to 265 serves as a coordination point for Mo-bis(molybdopterin guanine dinucleotide); that stretch reads FCKPGR.

It belongs to the FdhD family.

It is found in the cytoplasm. Required for formate dehydrogenase (FDH) activity. Acts as a sulfur carrier protein that transfers sulfur from IscS to the molybdenum cofactor prior to its insertion into FDH. The polypeptide is Sulfur carrier protein FdhD (Salmonella typhi).